The following is a 207-amino-acid chain: Small ribosomal subunit protein uS4 (207 aa).

Residues 98–164 (RRLDNVVYRM…AKFKNLVEVN (67 aa)) enclose the S4 RNA-binding domain.

It belongs to the universal ribosomal protein uS4 family. As to quaternary structure, part of the 30S ribosomal subunit. Contacts protein S5. The interaction surface between S4 and S5 is involved in control of translational fidelity.

Functionally, one of the primary rRNA binding proteins, it binds directly to 16S rRNA where it nucleates assembly of the body of the 30S subunit. In terms of biological role, with S5 and S12 plays an important role in translational accuracy. This Clostridioides difficile (strain 630) (Peptoclostridium difficile) protein is Small ribosomal subunit protein uS4.